Consider the following 261-residue polypeptide: Basic leucine zipper 19 (261 aa).

2 disordered regions span residues 1–22 (MEDG…MGEL) and 74–100 (ESDE…LGNR). Polar residues predominate over residues 8 to 18 (FSNQEVFSSSE). Basic and acidic residues predominate over residues 88-100 (CGKKGEKRPLGNR). Positions 89–155 (GKKGEKRPLG…SRLKCLLVDL (67 aa)) constitute a bZIP domain. The interval 90 to 113 (KKGEKRPLGNREAVRKYREKKKAK) is basic motif. The interval 117 to 131 (LEDEVARLRAVNQQL) is leucine-zipper. Residues 237 to 248 (NGSFSNVNTSVS) are compositionally biased toward low complexity. The disordered stretch occupies residues 237 to 261 (NGSFSNVNTSVSNKRKGGHRASRAV). Residues 249–261 (NKRKGGHRASRAV) are compositionally biased toward basic residues.

It localises to the nucleus. Functionally, transcription factor involved in the response to zinc ion deficiency. Binds to the consensus sequence 5'-[AG]TGTCGACA[CT]-3' also called zinc deficiency response element (ZDRE). The ZDRE sequence is conserved in the plant kingdom and present in the promoters of genes that constitute the primary response to zinc deficiency, comprising additional ZIP metal transporter genes. Required for zinc accumulation in roots. Mediates the expression of the zinc transporters ZIP3, ZIP4, ZIP5 and ZIP9 during growth in zinc-deficient conditions. ZIP9 transporter is involved in zinc uptake in roots. This is Basic leucine zipper 19 from Arabidopsis thaliana (Mouse-ear cress).